Consider the following 270-residue polypeptide: Putative pyruvate, phosphate dikinase regulatory protein 1 (270 aa).

Residue 151–158 participates in ADP binding; sequence GVSRTSKT.

This sequence belongs to the pyruvate, phosphate/water dikinase regulatory protein family. PDRP subfamily.

The catalysed reaction is N(tele)-phospho-L-histidyl/L-threonyl-[pyruvate, phosphate dikinase] + ADP = N(tele)-phospho-L-histidyl/O-phospho-L-threonyl-[pyruvate, phosphate dikinase] + AMP + H(+). The enzyme catalyses N(tele)-phospho-L-histidyl/O-phospho-L-threonyl-[pyruvate, phosphate dikinase] + phosphate + H(+) = N(tele)-phospho-L-histidyl/L-threonyl-[pyruvate, phosphate dikinase] + diphosphate. Bifunctional serine/threonine kinase and phosphorylase involved in the regulation of the pyruvate, phosphate dikinase (PPDK) by catalyzing its phosphorylation/dephosphorylation. The protein is Putative pyruvate, phosphate dikinase regulatory protein 1 of Enterococcus faecalis (strain ATCC 700802 / V583).